A 120-amino-acid polypeptide reads, in one-letter code: NAD(P)H-quinone oxidoreductase subunit 3 (120 aa).

The next 3 membrane-spanning stretches (helical) occupy residues 10 to 32, 64 to 84, and 89 to 109; these read LLGF…KVLR, MFAL…PWAV, and LGVL…VGLV.

It belongs to the complex I subunit 3 family. In terms of assembly, NDH-1 can be composed of about 15 different subunits; different subcomplexes with different compositions have been identified which probably have different functions.

The protein localises to the cellular thylakoid membrane. The enzyme catalyses a plastoquinone + NADH + (n+1) H(+)(in) = a plastoquinol + NAD(+) + n H(+)(out). It catalyses the reaction a plastoquinone + NADPH + (n+1) H(+)(in) = a plastoquinol + NADP(+) + n H(+)(out). Functionally, NDH-1 shuttles electrons from an unknown electron donor, via FMN and iron-sulfur (Fe-S) centers, to quinones in the respiratory and/or the photosynthetic chain. The immediate electron acceptor for the enzyme in this species is believed to be plastoquinone. Couples the redox reaction to proton translocation, and thus conserves the redox energy in a proton gradient. Cyanobacterial NDH-1 also plays a role in inorganic carbon-concentration. This Acaryochloris marina (strain MBIC 11017) protein is NAD(P)H-quinone oxidoreductase subunit 3.